The following is a 60-amino-acid chain: Large ribosomal subunit protein uL30 (60 aa).

The protein belongs to the universal ribosomal protein uL30 family. Part of the 50S ribosomal subunit.

The sequence is that of Large ribosomal subunit protein uL30 from Albidiferax ferrireducens (strain ATCC BAA-621 / DSM 15236 / T118) (Rhodoferax ferrireducens).